Here is a 166-residue protein sequence, read N- to C-terminus: Orotate phosphoribosyltransferase (166 aa).

Residues Arg83, Lys84, Arg86, His88, and 108-116 (EDVVTTGNS) contribute to the 5-phospho-alpha-D-ribose 1-diphosphate site. Residues Thr112 and Arg140 each coordinate orotate.

This sequence belongs to the purine/pyrimidine phosphoribosyltransferase family. PyrE subfamily. Homodimer. Mg(2+) serves as cofactor.

It catalyses the reaction orotidine 5'-phosphate + diphosphate = orotate + 5-phospho-alpha-D-ribose 1-diphosphate. It functions in the pathway pyrimidine metabolism; UMP biosynthesis via de novo pathway; UMP from orotate: step 1/2. Its function is as follows. Catalyzes the transfer of a ribosyl phosphate group from 5-phosphoribose 1-diphosphate to orotate, leading to the formation of orotidine monophosphate (OMP). The chain is Orotate phosphoribosyltransferase from Thermoplasma volcanium (strain ATCC 51530 / DSM 4299 / JCM 9571 / NBRC 15438 / GSS1).